A 601-amino-acid chain; its full sequence is MEGSDFLLAGVLFLFAAVAAVPLASRLGIGAVLGYLLAGIAIGPWGLGFISDVDEILHFSELGVVFLMFIIGLELNPSKLWQLRRSIFGVGAAQVLLSAALLAGLLMLTDFAWQAAVVGGIGLAMSSTAMALQLMREKGMNRSESGQLGFSVLLFQDLAVIPALALVPLLAGSADEHFDWMKVGMKVLAFVGMLIGGRYLLRPVFRFIAASGVREVFTAATLLLVLGSALFMDALGLSMALGTFIAGVLLAESEYRHELETAIDPFKGLLLGLFFISVGMSLNLGVLYTHLLWVVISVVVLVAVKILVLYLLARLYGVRSSERMQFAGVLSQGGEFAFVLFSTASSQRLFQGDQMALLLVTVTLSMMTTPLLMKLVDKWLSRQFNGPEEEDEKPWVNDDKPQVIVVGFGRFGQVIGRLLMANKMRITVLERDISAVNLMRKYGYKVYYGDATQVDLLRSAGAEAAESIVITCNEPEDTMKLVEICQQHFPHLHILARARGRVEAHELLQAGVTQFSRETFSSALELGRKTLVTLGMHPHQAQRAQLHFRRLDMRMLRELIPMHADTVQISRAREARRELEEIFQREMQQERRQLDGWDEFE.

The next 13 helical transmembrane spans lie at 4-24 (SDFLLAGVLFLFAAVAAVPLA), 29-49 (IGAVLGYLLAGIAIGPWGLGF), 55-75 (EILHFSELGVVFLMFIIGLEL), 87-107 (IFGVGAAQVLLSAALLAGLLM), 115-135 (AAVVGGIGLAMSSTAMALQLM), 152-172 (VLLFQDLAVIPALALVPLLAG), 177-197 (HFDWMKVGMKVLAFVGMLIGG), 207-227 (FIAASGVREVFTAATLLLVLG), 230-250 (LFMDALGLSMALGTFIAGVLL), 268-288 (GLLLGLFFISVGMSLNLGVLY), 291-311 (LLWVVISVVVLVAVKILVLYL), 324-344 (MQFAGVLSQGGEFAFVLFSTA), and 356-376 (ALLLVTVTLSMMTTPLLMKLV). The RCK N-terminal domain occupies 400–519 (KPQVIVVGFG…AGVTQFSRET (120 aa)).

It belongs to the monovalent cation:proton antiporter 2 (CPA2) transporter (TC 2.A.37) family. KefB subfamily. As to quaternary structure, interacts with the regulatory subunit KefG.

It localises to the cell inner membrane. Activated by adducts between glutathione and electrophiles. In terms of biological role, pore-forming subunit of a potassium efflux system that confers protection against electrophiles. Catalyzes K(+)/H(+) antiport. The chain is Glutathione-regulated potassium-efflux system protein KefB from Escherichia coli (strain K12).